The primary structure comprises 218 residues: uncharacterized protein (218 aa).

An RING-type zinc finger spans residues 154–199 (CFICTMEYSRTDKNLHPIILNCGHNLCRSCINKLTGNGIVKCPFDR).

This is an uncharacterized protein from Caenorhabditis elegans.